The sequence spans 438 residues: UDP-N-acetylmuramoylalanine--D-glutamate ligase (438 aa).

An ATP-binding site is contributed by 112-118 (GSNGKST).

Belongs to the MurCDEF family.

It is found in the cytoplasm. It carries out the reaction UDP-N-acetyl-alpha-D-muramoyl-L-alanine + D-glutamate + ATP = UDP-N-acetyl-alpha-D-muramoyl-L-alanyl-D-glutamate + ADP + phosphate + H(+). It participates in cell wall biogenesis; peptidoglycan biosynthesis. Its function is as follows. Cell wall formation. Catalyzes the addition of glutamate to the nucleotide precursor UDP-N-acetylmuramoyl-L-alanine (UMA). This is UDP-N-acetylmuramoylalanine--D-glutamate ligase from Escherichia coli O6:K15:H31 (strain 536 / UPEC).